The primary structure comprises 57 residues: Granulin-3 (57 aa).

2 cysteine pairs are disulfide-bonded: Cys-4–Cys-16 and Cys-10–Cys-26.

The protein belongs to the granulin family. Granulins are disulfide bridged. Ubiquitous.

It is found in the secreted. Functionally, granulins have possible cytokine-like activity. They may play a role in inflammation, wound repair, and tissue remodeling. This Cyprinus carpio (Common carp) protein is Granulin-3.